A 152-amino-acid polypeptide reads, in one-letter code: ALK and LTK ligand 2 (152 aa).

The signal sequence occupies residues 1 to 24 (MRGPGHPLLLGLLLVLGAAGRGRG). 2 disulfide bridges follow: C111/C147 and C125/C134.

Belongs to the ALKAL family. As to quaternary structure, homodimer; interchain disulfide bond is not required for homodimerization. Widely expressed with highest levels in adrenal gland and modest levels in pancreas, testis and uterus.

It is found in the secreted. Its subcellular location is the cell membrane. Its function is as follows. Cytokine that acts as a physiological ligand for receptor tyrosine kinases LTK and ALK, leading to their activation. Cytokine-binding is sufficient to activate LTK. In contrast, ALKAL2-driven activation of ALK is coupled with heparin-binding to ALK. Stimulation of ALK signaling is involved in neural development and regulation of energy expenditure. The chain is ALK and LTK ligand 2 from Homo sapiens (Human).